Consider the following 403-residue polypeptide: MDRLTVRELSPEENKVLVRVDFNVPIKDGKILDDIRIRSAMPTINYLLQKRAAVILMSHLGRPKGTGFEEKYSLQPVVEVLEGYLGHHVPLAPDCIGEVARQAVAQLSPGRVLLLENLRFHRGEEHPEEDPTFAAELSSYGDFYVNDAFGTSHRKHASVYHVPQAFPGRSAAGLLMEKELEFLGQHLLHSPKRPFTAILGGAKVSSKIGVIEALLSQVNNLLLAGGMGFTFLKALGKSVGNSLVEESGIELARRVLKLAEQRNVRIVLPIDVKVAKACEPGVSWSETLIDQGIPADLEGLDIGTKTIQEFCKIIDASATVFWNGPVGVYEVPPFDQGSMAIANCLARHSSATTVVGGGDAAAVVALAGCTSQVSHVSTGGGASLEFLENGFLPGTEVLSPAQD.

Substrate contacts are provided by residues 21-23 (DFN), R36, 59-62 (HLGR), R119, and R154. ATP is bound by residues K207, G299, E330, and 357-360 (GGDA).

Belongs to the phosphoglycerate kinase family. Monomer.

The protein localises to the cytoplasm. It catalyses the reaction (2R)-3-phosphoglycerate + ATP = (2R)-3-phospho-glyceroyl phosphate + ADP. The protein operates within carbohydrate degradation; glycolysis; pyruvate from D-glyceraldehyde 3-phosphate: step 2/5. This Chlamydia caviae (strain ATCC VR-813 / DSM 19441 / 03DC25 / GPIC) (Chlamydophila caviae) protein is Phosphoglycerate kinase.